A 635-amino-acid polypeptide reads, in one-letter code: Extracellular metalloproteinase 9 (635 aa).

A signal peptide spans 1 to 19 (MHGLLLAAGLLTLPLRALA). Residues 20–246 (HPGHQSTSIL…IHGVTDYVAD (227 aa)) constitute a propeptide that is removed on maturation. An N-linked (GlcNAc...) asparagine glycan is attached at Asn-274. The tract at residues 279 to 307 (TWHSDGNTRYPTTRGNNGIAQDNPSGGTG) is disordered. Asn-413 is a glycosylation site (N-linked (GlcNAc...) asparagine). His-430 lines the Zn(2+) pocket. Glu-431 is a catalytic residue. A Zn(2+)-binding site is contributed by His-434. Residue Asn-475 is glycosylated (N-linked (GlcNAc...) asparagine).

The protein belongs to the peptidase M36 family. Zn(2+) serves as cofactor.

The protein localises to the secreted. In terms of biological role, secreted metalloproteinase that allows assimilation of proteinaceous substrates. The protein is Extracellular metalloproteinase 9 (MEP9) of Uncinocarpus reesii (strain UAMH 1704).